A 486-amino-acid polypeptide reads, in one-letter code: Histone acetyltransferase type B catalytic subunit DDB_G0274269 (486 aa).

Positions 27 to 69 (DIEELKNKDNKENKDKENKAHIKDEGEEEEQKEKKEEEEKEDD) form a coiled coil. Residues 33–50 (NKDNKENKDKENKAHIKD) show a composition bias toward basic and acidic residues. The interval 33–78 (NKDNKENKDKENKAHIKDEGEEEEQKEKKEEEEKEDDGGPISFHPT) is disordered. One can recognise an N-acetyltransferase domain in the interval 189–386 (VVFRYHEKLQ…YRISIKKRLY (198 aa)). Acetyl-CoA-binding positions include 260-262 (YLI) and 267-273 (QRMGHGK). Glutamate 299 acts as the Proton donor/acceptor in catalysis. A coiled-coil region spans residues 392-481 (DSEQIEKIKQ…KNYHKTLSSL (90 aa)).

Belongs to the HAT1 family.

It catalyses the reaction L-lysyl-[protein] + acetyl-CoA = N(6)-acetyl-L-lysyl-[protein] + CoA + H(+). This Dictyostelium discoideum (Social amoeba) protein is Histone acetyltransferase type B catalytic subunit DDB_G0274269.